The following is a 651-amino-acid chain: Histone-arginine methyltransferase CARM1 (651 aa).

The tract at residues 28 to 139 is interaction with C9orf72; sequence ATVSVFPGAR…GHTLERSVFS (112 aa). The region spanning 147-454 is the SAM-dependent MTase PRMT-type domain; it reads AVQYFQFYGY…KRQSYDISIV (308 aa). Positions 160, 169, 193, and 215 each coordinate S-adenosyl-L-methionine. A Phosphoserine modification is found at S217. K228 is covalently cross-linked (Glycyl lysine isopeptide (Lys-Gly) (interchain with G-Cter in ubiquitin)). E244 and S272 together coordinate S-adenosyl-L-methionine. The tract at residues 347 to 380 is required for nuclear translocation; sequence RILMAKSVKYTVNFLEAKEGDLHRIEIPFKFHML. The tract at residues 500–651 is transactivation domain; the sequence is TGSTYNLSSG…IPTNTMHYGS (152 aa). The residue at position 551 (R551) is a Dimethylated arginine. Residues 581–617 are disordered; the sequence is RSSYQWGPGRLRGHAGSSVPMTCPTGSSGAQGGGGSS.

It belongs to the class I-like SAM-binding methyltransferase superfamily. Protein arginine N-methyltransferase family. Homodimer. Interacts with NR1H4. Interacts with SNRPC. Interacts with the C-terminus of NCOA2/GRIP1, NCO3/ACTR and NCOA1/SRC1. Part of a complex consisting of CARM1, EP300/P300 and NCOA2/GRIP1. Interacts with FLII, TP53, myogenic factor MEF2, EP300/P300, TRIM24, CREBBP and CTNNB1. Interacts with RELA. Identified in a complex containing CARM1, TRIM24 and NCOA2/GRIP1. Interacts with NCOA3/SRC3. Interacts with SKP2. Interacts (via PH domain-like fold) with C9orf72. Interacts with PARP1; promoting PARP1 recruimtent to replication forks. Post-translationally, auto-methylated on Arg-551. Methylation enhances transcription coactivator activity. Methylation is required for its role in the regulation of pre-mRNA alternative splicing. Phosphorylation at Ser-217 interferes with S-adenosyl-L-methionine binding and strongly reduces methyltransferase activity. Phosphorylation at Ser-217 is strongly increased during mitosis, and decreases rapidly to a very low, basal level after entry into the G1 phase of the cell cycle. Phosphorylation at Ser-217 may promote location in the cytosol. In terms of processing, ubiquitinated by E3 ubiquitin-protein ligase complex containing FBXO9 at Lys-228; leading to proteasomal degradation. In terms of tissue distribution, isoform 1 is expressed at low levels in brain, liver and testis. As to expression, isoform 2 is highly expressed in brain, liver, skeletal muscle and testis. Isoform 3 is highly expressed in spleen, liver and kidney. In terms of tissue distribution, isoform 4 is expressed in spleen, liver and kidney.

Its subcellular location is the nucleus. It localises to the cytoplasm. The protein localises to the chromosome. It carries out the reaction L-arginyl-[protein] + 2 S-adenosyl-L-methionine = N(omega),N(omega)-dimethyl-L-arginyl-[protein] + 2 S-adenosyl-L-homocysteine + 2 H(+). With respect to regulation, methylation of H3R17 (H3R17me) by CARM1 is stimulated by preacetylation of H3 'Lys-18' (H3K18ac) H3 'Lys-23' (H3K23ac) by EP300 and blocked by citrullination of H3 'Arg-17' (H3R17ci) by PADI4. Its function is as follows. Methylates (mono- and asymmetric dimethylation) the guanidino nitrogens of arginyl residues in several proteins involved in DNA packaging, transcription regulation, pre-mRNA splicing, and mRNA stability. Recruited to promoters upon gene activation together with histone acetyltransferases from EP300/P300 and p160 families, methylates histone H3 at 'Arg-17' (H3R17me), forming mainly asymmetric dimethylarginine (H3R17me2a), leading to activation of transcription via chromatin remodeling. During nuclear hormone receptor activation and TCF7L2/TCF4 activation, acts synergically with EP300/P300 and either one of the p160 histone acetyltransferases NCOA1/SRC1, NCOA2/GRIP1 and NCOA3/ACTR or CTNNB1/beta-catenin to activate transcription. During myogenic transcriptional activation, acts together with NCOA3/ACTR as a coactivator for MEF2C. During monocyte inflammatory stimulation, acts together with EP300/P300 as a coactivator for NF-kappa-B. Acts as a coactivator for PPARG, promotes adipocyte differentiation and the accumulation of brown fat tissue. Plays a role in the regulation of pre-mRNA alternative splicing by methylation of splicing factors. Also seems to be involved in p53/TP53 transcriptional activation. Methylates EP300/P300, both at 'Arg-2142', which may loosen its interaction with NCOA2/GRIP1, and at 'Arg-580' and 'Arg-604' in the KIX domain, which impairs its interaction with CREB and inhibits CREB-dependent transcriptional activation. Also methylates arginine residues in RNA-binding proteins PABPC1, ELAVL1 and ELAV4, which may affect their mRNA-stabilizing properties and the half-life of their target mRNAs. Acts as a transcriptional coactivator of ACACA/acetyl-CoA carboxylase by enriching H3R17 methylation at its promoter, thereby positively regulating fatty acid synthesis. Independently of its methyltransferase activity, involved in replication fork progression: promotes PARP1 recruitment to replication forks, leading to poly-ADP-ribosylation of chromatin at replication forks and reduced fork speed. Functionally, isoform 3 specifically affects pre-mRNA splicing. This activity is independent from methyltransferase activity. The protein is Histone-arginine methyltransferase CARM1 (Carm1) of Rattus norvegicus (Rat).